The following is a 1040-amino-acid chain: V(D)J recombination-activating protein 1 (1040 aa).

Residues 39–53 show a composition bias toward basic and acidic residues; it reads EKAPEEAQKEKDSSE. The interval 39–71 is disordered; that stretch reads EKAPEEAQKEKDSSEGKPYLEQSPVVPEKPGGQ. A Glycyl lysine isopeptide (Lys-Gly) (interchain with G-Cter in ubiquitin) cross-link involves residue K233. Zn(2+) is bound by residues C266, H270, C290, C293, H295, C305, H307, C310, C313, C325, C328, C355, C360, H372, and H376. The RING-type zinc-finger motif lies at 290-329; it reads CQICEHILADPVETSCKHLFCRICILRCLKVMGSYCPSCR. The segment at 351–380 adopts an RAG1-type zinc-finger fold; it reads LMVKCPAQDCNEEVSLEKYNHHVSSHKESK. The NBD DNA-binding region spans 389 to 456; it reads GGRPRQHLLS…QADELEAIMQ (68 aa). Residues D600, D708, and E962 each contribute to the a divalent metal cation site.

The protein belongs to the RAG1 family. In terms of assembly, homodimer. Component of the RAG complex composed of core components RAG1 and RAG2, and associated component HMGB1 or HMGB2. Interacts with DCAF1, leading to recruitment of the CUL4A-RBX1-DDB1-DCAF1/VPRBP complex to ubiquitinate proteins and limit error-prone repair during V(D)J recombination. It depends on Mg(2+) as a cofactor. Requires Mn(2+) as cofactor. Post-translationally, autoubiquitinated in the presence of CDC34/UBCH3. Maturing lymphoid cells and central nervous system.

It localises to the nucleus. It carries out the reaction S-ubiquitinyl-[E2 ubiquitin-conjugating enzyme]-L-cysteine + [acceptor protein]-L-lysine = [E2 ubiquitin-conjugating enzyme]-L-cysteine + N(6)-ubiquitinyl-[acceptor protein]-L-lysine.. Catalytic component of the RAG complex, a multiprotein complex that mediates the DNA cleavage phase during V(D)J recombination. V(D)J recombination assembles a diverse repertoire of immunoglobulin and T-cell receptor genes in developing B and T-lymphocytes through rearrangement of different V (variable), in some cases D (diversity), and J (joining) gene segments. In the RAG complex, RAG1 mediates the DNA-binding to the conserved recombination signal sequences (RSS) and catalyzes the DNA cleavage activities by introducing a double-strand break between the RSS and the adjacent coding segment. RAG2 is not a catalytic component but is required for all known catalytic activities. DNA cleavage occurs in 2 steps: a first nick is introduced in the top strand immediately upstream of the heptamer, generating a 3'-hydroxyl group that can attack the phosphodiester bond on the opposite strand in a direct transesterification reaction, thereby creating 4 DNA ends: 2 hairpin coding ends and 2 blunt, 5'-phosphorylated ends. The chromatin structure plays an essential role in the V(D)J recombination reactions and the presence of histone H3 trimethylated at 'Lys-4' (H3K4me3) stimulates both the nicking and haipinning steps. The RAG complex also plays a role in pre-B cell allelic exclusion, a process leading to expression of a single immunoglobulin heavy chain allele to enforce clonality and monospecific recognition by the B-cell antigen receptor (BCR) expressed on individual B-lymphocytes. The introduction of DNA breaks by the RAG complex on one immunoglobulin allele induces ATM-dependent repositioning of the other allele to pericentromeric heterochromatin, preventing accessibility to the RAG complex and recombination of the second allele. In addition to its endonuclease activity, RAG1 also acts as an E3 ubiquitin-protein ligase that mediates monoubiquitination of histone H3. Histone H3 monoubiquitination is required for the joining step of V(D)J recombination. Mediates polyubiquitination of KPNA1. The sequence is that of V(D)J recombination-activating protein 1 (Rag1) from Mus musculus (Mouse).